Here is a 312-residue protein sequence, read N- to C-terminus: Methionyl-tRNA formyltransferase (312 aa).

109-112 (SLLP) contributes to the (6S)-5,6,7,8-tetrahydrofolate binding site.

Belongs to the Fmt family.

The enzyme catalyses L-methionyl-tRNA(fMet) + (6R)-10-formyltetrahydrofolate = N-formyl-L-methionyl-tRNA(fMet) + (6S)-5,6,7,8-tetrahydrofolate + H(+). In terms of biological role, attaches a formyl group to the free amino group of methionyl-tRNA(fMet). The formyl group appears to play a dual role in the initiator identity of N-formylmethionyl-tRNA by promoting its recognition by IF2 and preventing the misappropriation of this tRNA by the elongation apparatus. In Listeria monocytogenes serotype 4a (strain HCC23), this protein is Methionyl-tRNA formyltransferase.